The following is a 604-amino-acid chain: Putative O-acetyltransferase SAR0937 (604 aa).

The next 11 helical transmembrane spans lie at Tyr-15–Leu-35, Gly-43–Leu-63, Leu-85–Ser-105, Ala-150–Ile-170, Ile-176–Ser-196, Leu-212–Asn-232, Tyr-240–Ile-260, Ile-267–Val-287, Tyr-310–Gly-330, Ile-332–Tyr-352, and Phe-377–Ala-397. Active-site residues include Ser-459, Asp-581, and His-584.

Belongs to the acyltransferase 3 family.

Its subcellular location is the cell membrane. This chain is Putative O-acetyltransferase SAR0937, found in Staphylococcus aureus (strain MRSA252).